The following is a 109-amino-acid chain: Small ribosomal subunit protein uS17 (109 aa).

It belongs to the universal ribosomal protein uS17 family. Part of the 30S ribosomal subunit.

In terms of biological role, one of the primary rRNA binding proteins, it binds specifically to the 5'-end of 16S ribosomal RNA. This chain is Small ribosomal subunit protein uS17, found in Methanosarcina mazei (strain ATCC BAA-159 / DSM 3647 / Goe1 / Go1 / JCM 11833 / OCM 88) (Methanosarcina frisia).